The sequence spans 36 residues: Egg-laying-like hormone (36 aa).

Lysine 36 bears the Lysine amide mark.

Supra, subesophageal ganglia and segmental ganglia of the ventral nerve cord and brain.

In terms of biological role, may be involved in leech reproduction. The polypeptide is Egg-laying-like hormone (Theromyzon tessulatum (Duck leech)).